Consider the following 512-residue polypeptide: Maturase K (512 aa).

The protein belongs to the intron maturase 2 family. MatK subfamily.

It is found in the plastid. It localises to the chloroplast. Its function is as follows. Usually encoded in the trnK tRNA gene intron. Probably assists in splicing its own and other chloroplast group II introns. The polypeptide is Maturase K (Lilium longiflorum (Trumpet lily)).